Reading from the N-terminus, the 176-residue chain is ATP-dependent protease subunit HslV (176 aa).

Threonine 2 is an active-site residue. Residues glycine 157, cysteine 160, and threonine 163 each contribute to the Na(+) site.

This sequence belongs to the peptidase T1B family. HslV subfamily. A double ring-shaped homohexamer of HslV is capped on each side by a ring-shaped HslU homohexamer. The assembly of the HslU/HslV complex is dependent on binding of ATP.

It is found in the cytoplasm. The catalysed reaction is ATP-dependent cleavage of peptide bonds with broad specificity.. With respect to regulation, allosterically activated by HslU binding. Its function is as follows. Protease subunit of a proteasome-like degradation complex believed to be a general protein degrading machinery. This Proteus mirabilis (strain HI4320) protein is ATP-dependent protease subunit HslV.